We begin with the raw amino-acid sequence, 982 residues long: Envelope glycoprotein gp160 (982 aa).

Residues M1–N106 form the signal peptide. The Extracellular portion of the chain corresponds to Q107–Y831. Residues N140, N161, N206, N258, N298, N364, N381, N387, N403, N414, N435, N439, N470, N475, N481, N491, N501, N515, N527, N537, N542, N543, and N568 are each glycosylated (N-linked (GlcNAc...) asparagine; by host). Positions G657–L677 are fusion peptide. A coiled-coil region spans residues R689–V738. N697 carries N-linked (GlcNAc...) asparagine; by host glycosylation. The segment at L723–V738 is immunosuppression. N-linked (GlcNAc...) asparagine; by host glycosylation is found at N764, N771, N787, and N821. Residues E779–K814 adopt a coiled-coil conformation. The helical transmembrane segment at I832–I852 threads the bilayer. Over S853–L982 the chain is Cytoplasmic. C855 carries S-palmitoyl cysteine; by host lipidation.

As to quaternary structure, the mature envelope protein (Env) consists of a trimer of SU-TM heterodimers attached by noncovalent interactions or by a labile interchain disulfide bond. Post-translationally, specific enzymatic cleavages in vivo yield mature proteins. Envelope glycoproteins are synthesized as an inactive precursor that is N-glycosylated and processed likely by host cell furin or by a furin-like protease in the Golgi to yield the mature SU and TM proteins. The cleavage site between SU and TM requires the minimal sequence [KR]-X-[KR]-R. The transmembrane protein is palmitoylated.

It is found in the virion membrane. The protein resides in the host cell membrane. In terms of biological role, the surface protein (SU) attaches the virus to the host cell by binding to its receptor. This interaction triggers the refolding of the transmembrane protein (TM) and is thought to activate its fusogenic potential by unmasking its fusion peptide. Fusion occurs at the host cell plasma membrane. Functionally, the transmembrane protein (TM) acts as a class I viral fusion protein. Under the current model, the protein has at least 3 conformational states: pre-fusion native state, pre-hairpin intermediate state, and post-fusion hairpin state. During viral and target cell membrane fusion, the coiled coil regions (heptad repeats) assume a trimer-of-hairpins structure, positioning the fusion peptide in close proximity to the C-terminal region of the ectodomain. The formation of this structure appears to drive apposition and subsequent fusion of viral and target cell membranes. Membranes fusion leads to delivery of the nucleocapsid into the cytoplasm. This is Envelope glycoprotein gp160 (env) from Maedi visna virus (strain 1514) (MVV).